Here is a 158-residue protein sequence, read N- to C-terminus: 6,7-dimethyl-8-ribityllumazine synthase (158 aa).

5-amino-6-(D-ribitylamino)uracil contacts are provided by residues Phe23, 61–63 (SFE), and 85–87 (AVI). 90-91 (ET) provides a ligand contact to (2S)-2-hydroxy-3-oxobutyl phosphate. Residue His93 is the Proton donor of the active site. Phe118 contacts 5-amino-6-(D-ribitylamino)uracil. Arg132 contacts (2S)-2-hydroxy-3-oxobutyl phosphate.

This sequence belongs to the DMRL synthase family.

It catalyses the reaction (2S)-2-hydroxy-3-oxobutyl phosphate + 5-amino-6-(D-ribitylamino)uracil = 6,7-dimethyl-8-(1-D-ribityl)lumazine + phosphate + 2 H2O + H(+). It functions in the pathway cofactor biosynthesis; riboflavin biosynthesis; riboflavin from 2-hydroxy-3-oxobutyl phosphate and 5-amino-6-(D-ribitylamino)uracil: step 1/2. Catalyzes the formation of 6,7-dimethyl-8-ribityllumazine by condensation of 5-amino-6-(D-ribitylamino)uracil with 3,4-dihydroxy-2-butanone 4-phosphate. This is the penultimate step in the biosynthesis of riboflavin. The polypeptide is 6,7-dimethyl-8-ribityllumazine synthase (Prochlorococcus marinus (strain AS9601)).